Here is a 2376-residue protein sequence, read N- to C-terminus: Protein Ycf2 (2376 aa).

Disordered stretches follow at residues 173–194, 226–256, and 952–1011; these read SSQL…GTED, TEIE…EMNN, and KRKK…KRKE. Low complexity predominate over residues 235–245; it reads KGLSGSSSKSR. Basic and acidic residues-rich tracts occupy residues 246–255 and 960–1009; these read LFTEGEKEMN and KRKE…PEKR. 1441 to 1448 contacts ATP; sequence GSIGSGRS. Disordered regions lie at residues 1515–1534, 1860–2046, and 2112–2230; these read YEDR…DYEP, LVGS…LRPK, and PAEE…DGFS. Residues 1866–2025 show a composition bias toward acidic residues; that stretch reads TEEEVEGTEE…GEGTEDEEGE (160 aa). Basic and acidic residues predominate over residues 2026-2038; it reads GTEKDSSQFDNDR. Acidic residues-rich tracts occupy residues 2112–2129 and 2136–2213; these read PAEE…EALE and GEEE…ENDS.

The protein belongs to the Ycf2 family.

The protein localises to the plastid. Its subcellular location is the chloroplast stroma. Its function is as follows. Probable ATPase of unknown function. Its presence in a non-photosynthetic plant (Epifagus virginiana) and experiments in tobacco indicate that it has an essential function which is probably not related to photosynthesis. In Oenothera glazioviana (Large-flowered evening primrose), this protein is Protein Ycf2.